A 30-amino-acid polypeptide reads, in one-letter code: Dermonecrotic toxin LlSicTox-alphaIII-1 (30 aa).

Residue histidine 12 is part of the active site.

It belongs to the arthropod phospholipase D family. Class I subfamily. The cofactor is Mg(2+). In terms of processing, contains 1 disulfide bond. Expressed by the venom gland.

It is found in the secreted. The enzyme catalyses an N-(acyl)-sphingosylphosphocholine = an N-(acyl)-sphingosyl-1,3-cyclic phosphate + choline. It carries out the reaction an N-(acyl)-sphingosylphosphoethanolamine = an N-(acyl)-sphingosyl-1,3-cyclic phosphate + ethanolamine. The catalysed reaction is a 1-acyl-sn-glycero-3-phosphocholine = a 1-acyl-sn-glycero-2,3-cyclic phosphate + choline. It catalyses the reaction a 1-acyl-sn-glycero-3-phosphoethanolamine = a 1-acyl-sn-glycero-2,3-cyclic phosphate + ethanolamine. In terms of biological role, dermonecrotic toxins cleave the phosphodiester linkage between the phosphate and headgroup of certain phospholipids (sphingolipid and lysolipid substrates), forming an alcohol (often choline) and a cyclic phosphate. This toxin acts on sphingomyelin (SM). It may also act on ceramide phosphoethanolamine (CPE), lysophosphatidylcholine (LPC) and lysophosphatidylethanolamine (LPE), but not on lysophosphatidylserine (LPS), and lysophosphatidylglycerol (LPG). It acts by transphosphatidylation, releasing exclusively cyclic phosphate products as second products. In vivo, intradermal injection induces dermonecrosis. Induces hemolysis, increased vascular permeability, edema, inflammatory response, and platelet aggregation. This is Dermonecrotic toxin LlSicTox-alphaIII-1 from Loxosceles laeta (South American recluse spider).